A 741-amino-acid polypeptide reads, in one-letter code: Wall-associated receptor kinase 3 (741 aa).

Residues 1 to 23 (MKFQEGVFLVVIFFLAYTQLVKG) form the signal peptide. At 24 to 342 (QHQPREDCKL…CTRPEYKRTR (319 aa)) the chain is on the extracellular side. N37, N59, N78, N100, N103, N141, N192, N199, N232, N246, N261, and N266 each carry an N-linked (GlcNAc...) asparagine glycan. An EGF-like 1 domain is found at 245-292 (GNQTCEQAGSTRICGKNSSCYNSTTRNGYICKCNEGYDGNPYRSEGCK). 6 disulfide bridges follow: C249-C264, C258-C275, C277-C291, C297-C310, C304-C319, and C321-C333. The EGF-like 2; calcium-binding domain occupies 293–334 (DIDECISDTHNCSDPKTCRNRDGGFDCKCPSGYDLNSSMSCT). N303 carries N-linked (GlcNAc...) asparagine glycosylation. Residue N328 is glycosylated (N-linked (GlcNAc...) asparagine). A helical transmembrane segment spans residues 343 to 363 (IFLVIIIGVLVLLLAAICIQH). At 364-741 (ATKQRKYTKL…VAILDIETGR (378 aa)) the chain is on the cytoplasmic side. The residue at position 404 (T404) is a Phosphothreonine. One can recognise a Protein kinase domain in the interval 415–698 (YDESRILGQG…RVEKTKHKWS (284 aa)). ATP-binding positions include 421–429 (LGQGGQGTV) and K443. Y488 bears the Phosphotyrosine mark. The active-site Proton acceptor is the D540. Residues T574 and T579 each carry the phosphothreonine modification. Y587 is subject to Phosphotyrosine.

The protein belongs to the protein kinase superfamily. Ser/Thr protein kinase family. Predominantly expressed in green tissues such as stems and leaves.

It is found in the membrane. It carries out the reaction L-seryl-[protein] + ATP = O-phospho-L-seryl-[protein] + ADP + H(+). It catalyses the reaction L-threonyl-[protein] + ATP = O-phospho-L-threonyl-[protein] + ADP + H(+). In terms of biological role, serine/threonine-protein kinase that may function as a signaling receptor of extracellular matrix component. Binding to pectin may have significance in the control of cell expansion, morphogenesis and development. The chain is Wall-associated receptor kinase 3 (WAK3) from Arabidopsis thaliana (Mouse-ear cress).